A 764-amino-acid chain; its full sequence is Serine/threonine-protein kinase MPS1 (764 aa).

Disordered stretches follow at residues Glu-66–Ser-95, Glu-197–Asp-216, and Gln-258–Ile-316. The segment covering Thr-85–Ser-95 has biased composition (low complexity). Positions Glu-201 to Asp-216 are enriched in basic and acidic residues. 2 stretches are compositionally biased toward low complexity: residues Lys-272 to Ser-292 and Ser-306 to Ser-315. Positions Tyr-440–Met-720 constitute a Protein kinase domain. Residues Leu-446–Val-454 and Lys-468 contribute to the ATP site. Asp-563 acts as the Proton acceptor in catalysis.

The protein belongs to the protein kinase superfamily. Ser/Thr protein kinase family. Autophosphorylated.

It carries out the reaction L-seryl-[protein] + ATP = O-phospho-L-seryl-[protein] + ADP + H(+). The enzyme catalyses L-threonyl-[protein] + ATP = O-phospho-L-threonyl-[protein] + ADP + H(+). It catalyses the reaction L-tyrosyl-[protein] + ATP = O-phospho-L-tyrosyl-[protein] + ADP + H(+). In terms of biological role, involved in mitotic spindle assembly checkpoint signaling, a process that delays anaphase until chromosomes are bioriented on the spindle, and in the repair of incorrect mitotic kinetochore-spindle microtubule attachments. Phosphorylates SPC105 on MELT motifs; phosphorylation is required for recruitment of the BUB1-BUB3 complex to kinetochores. Phosphorylates CNN1, which contributes to the enrichment of CNN1 on anaphase kinetochores. Implicated in spindle pole body (SPD) duplication. Phosphorylates the SPC29 and SPC110 spindle pole body components. The chain is Serine/threonine-protein kinase MPS1 (MPS1) from Saccharomyces cerevisiae (strain ATCC 204508 / S288c) (Baker's yeast).